The primary structure comprises 143 residues: MAAEGRVQRVASELQKVISLLLRTKIKDSKLATATITEVELSKDLSYAKVYYTCLDIQEAQYISKAFEKSKGFFRSSIAKSLNLRIVPNLKFVYDKSLDYGMEMEGKIQQALEADSKIIKQDDNSLQENYKDSDKETKVEKLR.

The segment at 123-143 (DNSLQENYKDSDKETKVEKLR) is disordered.

The protein belongs to the RbfA family. As to quaternary structure, monomer. Binds 30S ribosomal subunits, but not 50S ribosomal subunits or 70S ribosomes.

The protein localises to the cytoplasm. Its function is as follows. One of several proteins that assist in the late maturation steps of the functional core of the 30S ribosomal subunit. Associates with free 30S ribosomal subunits (but not with 30S subunits that are part of 70S ribosomes or polysomes). Required for efficient processing of 16S rRNA. May interact with the 5'-terminal helix region of 16S rRNA. This is Ribosome-binding factor A from Francisella philomiragia subsp. philomiragia (strain ATCC 25017 / CCUG 19701 / FSC 153 / O#319-036).